The following is a 469-amino-acid chain: Neuraminidase (469 aa).

The Intravirion portion of the chain corresponds to 1–9 (MNPNQKIIT). The helical transmembrane segment at 10 to 30 (IGSVSLTIATICFLMQIAILV) threads the bilayer. An involved in apical transport and lipid raft association region spans residues 11–33 (GSVSLTIATICFLMQIAILVTTV). At 31-469 (TTVTLHFKQY…DGADINLMPI (439 aa)) the chain is on the virion surface side. Positions 36–88 (HFKQYECDSPANNQVMPCEPISIERNITEIVYLTNTTIEKEICPKLVEYRNWS) are hypervariable stalk region. Asn-61, Asn-70, and Asn-86 each carry an N-linked (GlcNAc...) asparagine; by host glycan. The segment at 91–469 (QCKITGFAPF…DGADINLMPI (379 aa)) is head of neuraminidase. 8 disulfides stabilise this stretch: Cys-92–Cys-417, Cys-124–Cys-129, Cys-183–Cys-230, Cys-232–Cys-237, Cys-278–Cys-291, Cys-280–Cys-289, Cys-318–Cys-337, and Cys-421–Cys-447. Arg-118 provides a ligand contact to substrate. The N-linked (GlcNAc...) asparagine; by host glycan is linked to Asn-146. Asp-151 acts as the Proton donor/acceptor in catalysis. Arg-152 serves as a coordination point for substrate. 2 N-linked (GlcNAc...) asparagine; by host glycosylation sites follow: Asn-200 and Asn-234. 276–277 (EE) lines the substrate pocket. A substrate-binding site is contributed by Arg-292. Asp-293, Gly-297, and Asp-324 together coordinate Ca(2+). A substrate-binding site is contributed by Arg-371. A glycan (N-linked (GlcNAc...) asparagine; by host) is linked at Asn-402. Tyr-406 (nucleophile) is an active-site residue.

The protein belongs to the glycosyl hydrolase 34 family. In terms of assembly, homotetramer. Ca(2+) serves as cofactor. In terms of processing, N-glycosylated.

Its subcellular location is the virion membrane. The protein resides in the host apical cell membrane. It carries out the reaction Hydrolysis of alpha-(2-&gt;3)-, alpha-(2-&gt;6)-, alpha-(2-&gt;8)- glycosidic linkages of terminal sialic acid residues in oligosaccharides, glycoproteins, glycolipids, colominic acid and synthetic substrates.. Its activity is regulated as follows. Inhibited by the neuraminidase inhibitors zanamivir (Relenza) and oseltamivir (Tamiflu). These drugs interfere with the release of progeny virus from infected cells and are effective against all influenza strains. Resistance to neuraminidase inhibitors is quite rare. In terms of biological role, catalyzes the removal of terminal sialic acid residues from viral and cellular glycoconjugates. Cleaves off the terminal sialic acids on the glycosylated HA during virus budding to facilitate virus release. Additionally helps virus spread through the circulation by further removing sialic acids from the cell surface. These cleavages prevent self-aggregation and ensure the efficient spread of the progeny virus from cell to cell. Otherwise, infection would be limited to one round of replication. Described as a receptor-destroying enzyme because it cleaves a terminal sialic acid from the cellular receptors. May facilitate viral invasion of the upper airways by cleaving the sialic acid moieties on the mucin of the airway epithelial cells. Likely to plays a role in the budding process through its association with lipid rafts during intracellular transport. May additionally display a raft-association independent effect on budding. Plays a role in the determination of host range restriction on replication and virulence. Sialidase activity in late endosome/lysosome traffic seems to enhance virus replication. The sequence is that of Neuraminidase from Aves (whales).